Reading from the N-terminus, the 215-residue chain is Porin MspC (215 aa).

Residues 1-31 (MKAISRVLIAMISALAAAVAGLFVSAGTSHA) form the signal peptide.

It belongs to the mycobacterial porin (TC 1.B.24) family. In terms of assembly, octamers. Probably forms a goblet with the wide end on the exterior of the outer membrane and a central channel. It is not known if mixed oligomers of MspC with other Msp subunits form in vivo.

It is found in the cell outer membrane. The protein resides in the secreted. Its subcellular location is the cell wall. Functionally, a constitutively expressed secondary porin, forms a water-filled channel which favors the permeation of cations and less efficiently phosphate. There are about 2400 porins in wild-type, 800 in an mspA deletion and 150 in a double mspA-mspC deletion. This Mycolicibacterium smegmatis (strain ATCC 700084 / mc(2)155) (Mycobacterium smegmatis) protein is Porin MspC (mspC).